Here is a 335-residue protein sequence, read N- to C-terminus: Methyltransferase pgmE (335 aa).

It belongs to the methyltransferase superfamily.

It participates in pigment biosynthesis. The protein operates within secondary metabolite biosynthesis. Its function is as follows. Methyltransferase; part of the gene cluster that mediates the biosynthesis of pleosporalin A, ascomycone A, as well as a third cryptic naphthoquinone derived pigment, all responsible for the coloration of conidia. Essential for the production of pleosporalin A, but not the 2 other final products. The pathway begins with the biosynthesis of the cyclized heptaketide 3-acetonyl-1,6,8-trihydroxy-2-naphthaldehyde by the NR-PKS pgmA. The C-6 hydroxyl group is further methylated by the O-methyltransferase pgmB to yield fusarubinaldehyde which is in turn oxidized by the cytochrome P450 monooxygenase pgmC at C-9. The C-1 hydroxyl group is then methylated spontaneously. Although pgmE, pgmD and pgmH are essential for the production of pleosporalin A, it is not the case for the 2 other final products and it remains difficult to assign a specific function to each enzyme. PgmF and pgmG seem not to be involved in pigment biosynthesis although they were regulated by the cluster-specific transcription factor pgmR. This is Methyltransferase pgmE from Aspergillus terreus.